Here is a 208-residue protein sequence, read N- to C-terminus: Outer-membrane lipoprotein carrier protein (208 aa).

An N-terminal signal peptide occupies residues Met1 to Ala21.

It belongs to the LolA family. In terms of assembly, monomer.

The protein resides in the periplasm. Functionally, participates in the translocation of lipoproteins from the inner membrane to the outer membrane. Only forms a complex with a lipoprotein if the residue after the N-terminal Cys is not an aspartate (The Asp acts as a targeting signal to indicate that the lipoprotein should stay in the inner membrane). This chain is Outer-membrane lipoprotein carrier protein, found in Methylococcus capsulatus (strain ATCC 33009 / NCIMB 11132 / Bath).